We begin with the raw amino-acid sequence, 535 residues long: uncharacterized protein (535 aa).

WD repeat units lie at residues 189-226 (RDDF…TRVL), 228-267 (ESIY…PRIS), 269-314 (HHPG…AVLV), 320-359 (AHDE…QPLY), 362-404 (QQNA…KIDE), and 462-505 (VHSV…SWHN).

This sequence belongs to the WD repeat CDC20/Fizzy family.

This is an uncharacterized protein from Schizosaccharomyces pombe (strain 972 / ATCC 24843) (Fission yeast).